Here is a 124-residue protein sequence, read N- to C-terminus: Fluoride-specific ion channel FluC (124 aa).

The next 4 membrane-spanning stretches (helical) occupy residues 4 to 24, 35 to 55, 60 to 80, and 95 to 115; these read VLLV…ISIF, FGTL…YALG, ISPE…TTFS, and WLKA…MVYL. Residues Gly-74 and Thr-77 each coordinate Na(+).

The protein belongs to the fluoride channel Fluc/FEX (TC 1.A.43) family.

The protein localises to the cell inner membrane. The enzyme catalyses fluoride(in) = fluoride(out). With respect to regulation, na(+) is not transported, but it plays an essential structural role and its presence is essential for fluoride channel function. Fluoride-specific ion channel. Important for reducing fluoride concentration in the cell, thus reducing its toxicity. The sequence is that of Fluoride-specific ion channel FluC from Shewanella putrefaciens (strain CN-32 / ATCC BAA-453).